Consider the following 113-residue polypeptide: U11-theraphotoxin-Hhn1a (113 aa).

The signal sequence occupies residues 1–21 (MNTVRVTFLLVFVLAVSLGQA). The propeptide occupies 22-74 (DKDENRMEMQEKTEQGNSYLDFAENLPLQKLEELEAKLLEEDSEESRNSRQKR). A compositionally biased stretch (basic and acidic residues) spans 60–69 (LEEDSEESRN). The interval 60-83 (LEEDSEESRNSRQKRCIGEGVPCD) is disordered. Disulfide bonds link Cys-75-Cys-90, Cys-82-Cys-95, and Cys-89-Cys-110.

The protein belongs to the neurotoxin 14 (magi-1) family. 01 (HNTX-16) subfamily. In terms of tissue distribution, expressed by the venom gland.

The protein resides in the secreted. Functionally, probable ion channel inhibitor. This is U11-theraphotoxin-Hhn1a from Cyriopagopus hainanus (Chinese bird spider).